We begin with the raw amino-acid sequence, 668 residues long: Threonine--tRNA ligase (668 aa).

Residues 1 to 64 (MSEAIFLTFP…ADGKIEIITR (64 aa)) enclose the TGS domain. The segment at 245-553 (DHRKLGREMD…LIENFAGHLP (309 aa)) is catalytic. The Zn(2+) site is built by C347, H398, and H530.

Belongs to the class-II aminoacyl-tRNA synthetase family. In terms of assembly, homodimer. Requires Zn(2+) as cofactor.

The protein resides in the cytoplasm. The catalysed reaction is tRNA(Thr) + L-threonine + ATP = L-threonyl-tRNA(Thr) + AMP + diphosphate + H(+). In terms of biological role, catalyzes the attachment of threonine to tRNA(Thr) in a two-step reaction: L-threonine is first activated by ATP to form Thr-AMP and then transferred to the acceptor end of tRNA(Thr). Also edits incorrectly charged L-seryl-tRNA(Thr). This chain is Threonine--tRNA ligase, found in Rhizobium leguminosarum bv. trifolii (strain WSM2304).